We begin with the raw amino-acid sequence, 118 residues long: Large ribosomal subunit protein bL20 (118 aa).

This sequence belongs to the bacterial ribosomal protein bL20 family.

Binds directly to 23S ribosomal RNA and is necessary for the in vitro assembly process of the 50S ribosomal subunit. It is not involved in the protein synthesizing functions of that subunit. This chain is Large ribosomal subunit protein bL20, found in Lacticaseibacillus casei (strain BL23) (Lactobacillus casei).